Here is a 92-residue protein sequence, read N- to C-terminus: Acylphosphatase (92 aa).

The region spanning 5-92 is the Acylphosphatase-like domain; it reads QVQLFVRGRV…GDFFDFRITD (88 aa). Active-site residues include R20 and N38.

The protein belongs to the acylphosphatase family.

The catalysed reaction is an acyl phosphate + H2O = a carboxylate + phosphate + H(+). The polypeptide is Acylphosphatase (acyP) (Sorangium cellulosum (strain So ce56) (Polyangium cellulosum (strain So ce56))).